Consider the following 667-residue polypeptide: WD repeat-containing protein 48 homolog (667 aa).

8 WD repeats span residues 26–65 (QHRN…NEKY), 71–110 (HHND…CMST), 113–152 (THRD…ALTA), 164–203 (GSKD…RSMK), 206–245 (GHTE…CVQT), 248–287 (VHKE…NKML), 290–329 (EEQA…RCTL), and 350–389 (KGGA…KKEQ). The tract at residues 591–615 (ETTPSGGNANNSLQNSQSDANSEGS) is disordered.

This sequence belongs to the WD repeat WDR48 family. Catalytic component of the Usp12-46 deubiquitylase complex consisting of Usp12-46, Wdr20 and Uaf1; regulatory subunit that, together wtih Wdr20, stabilizes Usp12-46. The Usp12-46 deubiquitylase complex associates with arr/arrow; the interaction leads to deubiquitination and stabilization of arr/arrow.

In terms of biological role, regulatory component of the Usp12-46 deubiquitylase complex. activates deubiquitination by increasing the catalytic turnover without increasing the affinity of deubiquitinating enzymes for the substrate. The complex deubiquitylates the wg/wingless-signaling receptor arr/arrow, which stabilizes the receptor and increases its concentration at the cell surface; this enhances the sensitivity of cells to wg/wingless-signal stimulation. This increases the amplitude and spatial range of the signaling response to the wg/wingless morphogen gradient, facilitating the precise concentration-dependent regulation of its target genes. Together with Wdr20 and Usp12-46 required for wg/wingless-mediated signaling in the wing imaginal disc and for wg/wingless-dependent regulation of intestinal stem cell proliferation. This chain is WD repeat-containing protein 48 homolog, found in Drosophila ananassae (Fruit fly).